The following is a 514-amino-acid chain: Adenylosuccinate synthetase 1, chloroplastic (514 aa).

A chloroplast-targeting transit peptide spans 1 to 73 (MAMAAAAAVA…AQAIERESVK (73 aa)). Residues 100 to 106 (GDEGKGK) and 128 to 130 (GHT) contribute to the GTP site. The active-site Proton acceptor is the D101. D101 and G128 together coordinate Mg(2+). IMP is bound by residues 101–104 (DEGK), 126–129 (NAGH), T218, R232, Q312, T327, and R391. Catalysis depends on H129, which acts as the Proton donor. 387–393 (TTTGRPR) contributes to the substrate binding site. GTP is bound by residues R393, 419–421 (KLD), and 502–504 (GVG).

Belongs to the adenylosuccinate synthetase family. As to quaternary structure, homodimer. Mg(2+) serves as cofactor.

The protein resides in the plastid. The protein localises to the chloroplast. The catalysed reaction is IMP + L-aspartate + GTP = N(6)-(1,2-dicarboxyethyl)-AMP + GDP + phosphate + 2 H(+). It functions in the pathway purine metabolism; AMP biosynthesis via de novo pathway; AMP from IMP: step 1/2. Functionally, plays an important role in the de novo pathway and in the salvage pathway of purine nucleotide biosynthesis. Catalyzes the first committed step in the biosynthesis of AMP from IMP. The polypeptide is Adenylosuccinate synthetase 1, chloroplastic (Physcomitrium patens (Spreading-leaved earth moss)).